The following is a 94-amino-acid chain: Dynein light chain, cytoplasmic (94 aa).

This sequence belongs to the dynein light chain family. Homodimer. Cytoplasmic dynein consists of two catalytic heavy chains (HCs) and a number of non-catalytic subunits which present intermediate chains (ICs), light intermediate chains (LICs) and light chains (LCs). Component of the nuclear pore complex (NPC). The nuclear pore complex constitutes the exclusive means of nucleocytoplasmic transport. NPCs allow the passive diffusion of ions and small molecules and the active, nuclear transport receptor-mediated bidirectional transport of macromolecules such as proteins, RNAs, ribonucleoparticles (RNPs), and ribosomal subunits across the nuclear envelope. Due to its 8-fold rotational symmetry, all subunits are present with 8 copies or multiples thereof.

It localises to the cytoplasm. It is found in the cytoskeleton. The protein resides in the nucleus. Its subcellular location is the nuclear pore complex. Functionally, acts as one of several non-catalytic accessory components of the cytoplasmic dynein complex that are thought to be involved in linking dynein to cargos and to adapter proteins that regulate dynein function. Cytoplasmic dynein 1 acts as a motor for the intracellular retrograde motility of vesicles and organelles along microtubules. May play a role in changing or maintaining the spatial distribution of cytoskeletal structures. Also a component of the nuclear pore complex. This Emericella nidulans (strain FGSC A4 / ATCC 38163 / CBS 112.46 / NRRL 194 / M139) (Aspergillus nidulans) protein is Dynein light chain, cytoplasmic (nudG).